A 262-amino-acid chain; its full sequence is Cyclin-dependent kinase inhibitor 1 (262 aa).

The disordered stretch occupies residues 140-212 (SDVAEAGSEH…SAQQATRPKI (73 aa)). Positions 160–169 (SGRDRERRET) are enriched in basic and acidic residues. A compositionally biased stretch (low complexity) spans 198 to 208 (SAATASAQQAT).

This sequence belongs to the CDI family. ICK/KRP subfamily.

The chain is Cyclin-dependent kinase inhibitor 1 (KRP1) from Oryza sativa subsp. indica (Rice).